The chain runs to 412 residues: Phytoene synthase 1, chloroplastic (412 aa).

A chloroplast-targeting transit peptide spans 1–129 (MSVALLWVVS…AYDRCGEVCA (129 aa)).

Belongs to the phytoene/squalene synthase family. Monomer. Interacts with SGR1.

It is found in the plastid. The protein localises to the chloroplast. The catalysed reaction is 2 (2E,6E,10E)-geranylgeranyl diphosphate = 15-cis-phytoene + 2 diphosphate. Its pathway is carotenoid biosynthesis; phytoene biosynthesis; all-trans-phytoene from geranylgeranyl diphosphate: step 1/1. In terms of biological role, catalyzes the reaction from prephytoene diphosphate to phytoene. The chain is Phytoene synthase 1, chloroplastic (PSY1) from Solanum lycopersicum (Tomato).